The following is a 1149-amino-acid chain: Nitric oxide synthase, inducible (1149 aa).

Positions K22–H83 are disordered. Positions D23–N27 match the DINNN-motif; mediates interaction with SPSB1, SPSB2 and SPSB4 motif. Positions K50–G61 are enriched in polar residues. The Zn(2+) site is built by C109 and C114. S117 lines the (6R)-L-erythro-5,6,7,8-tetrahydrobiopterin pocket. C199 contributes to the heme b binding site. L-arginine is bound by residues Q262, W371, Y372, and E376. Positions 380, 461, 462, and 475 each coordinate (6R)-L-erythro-5,6,7,8-tetrahydrobiopterin. Residue Y490 participates in heme b binding. Residues F514 to S534 form a calmodulin-binding region. Residues A538–F676 form the Flavodoxin-like domain. Positions 544, 545, 546, 548, and 549 each coordinate FMN. Phosphotyrosine is present on Y574. Positions 590, 591, 627, 632, 634, 660, and 664 each coordinate FMN. The region spanning T729–P969 is the FAD-binding FR-type domain. R749 lines the NADP(+) pocket. Residues H771, R905, Y907, S908, T923, and A925 each coordinate FAD. Residue T928 participates in NADP(+) binding. Residues Y929, V942, C943, and S944 each contribute to the FAD site. Residues T983, R1016, S1045, R1046, K1052, Y1054, Q1056, and D1089 each coordinate NADP(+).

This sequence belongs to the NOS family. As to quaternary structure, homodimer. Interacts with NHERF1. Interacts with GAPDH; induced by oxidatively-modified low-densitity lipoprotein (LDL(ox)). Interacts with S100A8 and S100A9 to form the iNOS-S100A8/9 transnitrosylase complex. Interacts with SPSB1, SPSB2 and SPSB4. Interacts with ELOC and CUL5 in the presence of SPSB1 or SPSB2 or SPSB4. Forms a complex with ASL, ASS1 and HSP90AA1; the complex regulates cell-autonomous L-arginine synthesis and citrulline recycling while channeling extracellular L-arginine to nitric oxide synthesis pathway. Heme b is required as a cofactor. FAD serves as cofactor. It depends on FMN as a cofactor. The cofactor is (6R)-L-erythro-5,6,7,8-tetrahydrobiopterin. In terms of processing, polyubiquitinated; mediated by SPSB1, SPSB2 and SPSB4, leading to proteasomal degradation. In terms of tissue distribution, expressed in the lung and colon. Not detected in the heart, aorta, liver, kidney, and spleen.

The protein localises to the cytoplasm. Its subcellular location is the cytosol. It carries out the reaction 2 L-arginine + 3 NADPH + 4 O2 + H(+) = 2 L-citrulline + 2 nitric oxide + 3 NADP(+) + 4 H2O. Regulated by calcium/calmodulin. Produces nitric oxide (NO) which is a messenger molecule with diverse functions throughout the body. In macrophages, NO mediates tumoricidal and bactericidal actions. Also has nitrosylase activity and mediates cysteine S-nitrosylation of cytoplasmic target proteins such PTGS2/COX2. As component of the iNOS-S100A8/9 transnitrosylase complex involved in the selective inflammatory stimulus-dependent S-nitrosylation of GAPDH implicated in regulation of the GAIT complex activity and probably multiple targets including ANXA5, EZR, MSN and VIM. Involved in inflammation, enhances the synthesis of pro-inflammatory mediators such as IL6 and IL8. The protein is Nitric oxide synthase, inducible (NOS2) of Cavia porcellus (Guinea pig).